Here is a 298-residue protein sequence, read N- to C-terminus: N-acetylmuramic acid 6-phosphate etherase (298 aa).

Residues 55–218 (IHAQVSGGGR…STGLMIKSGK (164 aa)) form the SIS domain. Glu83 serves as the catalytic Proton donor. Glu114 is an active-site residue.

It belongs to the GCKR-like family. MurNAc-6-P etherase subfamily. In terms of assembly, homodimer.

It catalyses the reaction N-acetyl-D-muramate 6-phosphate + H2O = N-acetyl-D-glucosamine 6-phosphate + (R)-lactate. It participates in amino-sugar metabolism; 1,6-anhydro-N-acetylmuramate degradation. Its pathway is amino-sugar metabolism; N-acetylmuramate degradation. The protein operates within cell wall biogenesis; peptidoglycan recycling. Specifically catalyzes the cleavage of the D-lactyl ether substituent of MurNAc 6-phosphate, producing GlcNAc 6-phosphate and D-lactate. Together with AnmK, is also required for the utilization of anhydro-N-acetylmuramic acid (anhMurNAc) either imported from the medium or derived from its own cell wall murein, and thus plays a role in cell wall recycling. This Escherichia coli O7:K1 (strain IAI39 / ExPEC) protein is N-acetylmuramic acid 6-phosphate etherase.